The primary structure comprises 381 residues: MQVVGTVRVSGCGAVVAPSRRQCRVSAAVLTAAETATATRRRVTHSMPPEKAEVFRSLEGWARSSLLPLLKPVEECWQPTDFLPDSSSEMFEHQVHELRARAAGLPDEYFVVLVGDMITEEALPTYQTMINTLDGVRDETGASACPWAVWTRTWTAEENRHGDILGKYMYLSGRVDMRMVEKTVQYLIGSGMDPGTENNPYLGFVYTSFQERATAVSHGNTARLARAHGDDVLARTCGTIAADEKRHETAYGRIVEQLLRLDPDGAMLAIADMMHKRITMPAHLMHDGRDMNLFDHFAAVAQRLNVYTARDYADIVEFLVKRWKLETLETGLSGEGRRARDFVCGLAKRMRRAAERAEDRAKKDEQRKVKFSWIYDREVIV.

The N-terminal 26 residues, Met1 to Ser26, are a transit peptide targeting the chloroplast. Fe cation is bound by residues Glu120, Glu158, His161, Glu211, Glu244, and His247.

The protein belongs to the fatty acid desaturase type 2 family. In terms of assembly, homodimer. The cofactor is Fe(2+).

The protein resides in the plastid. The protein localises to the chloroplast. It catalyses the reaction octadecanoyl-[ACP] + 2 reduced [2Fe-2S]-[ferredoxin] + O2 + 2 H(+) = (9Z)-octadecenoyl-[ACP] + 2 oxidized [2Fe-2S]-[ferredoxin] + 2 H2O. Its pathway is lipid metabolism; fatty acid metabolism. In terms of biological role, converts stearoyl-ACP to oleoyl-ACP by introduction of a cis double bond between carbons 9 and 10 of the acyl chain. This chain is Stearoyl-[acyl-carrier-protein] 9-desaturase 1, chloroplastic, found in Oryza sativa subsp. indica (Rice).